We begin with the raw amino-acid sequence, 238 residues long: Probable transcriptional regulatory protein STER_0242 (238 aa).

Belongs to the TACO1 family. YeeN subfamily.

Its subcellular location is the cytoplasm. The sequence is that of Probable transcriptional regulatory protein STER_0242 from Streptococcus thermophilus (strain ATCC BAA-491 / LMD-9).